Reading from the N-terminus, the 595-residue chain is GRB2-associated-binding protein 3 (595 aa).

The region spanning 5–117 is the PH domain; it reads DTVCMGWLIK…WVHSISQVCN (113 aa). Residues 295 to 339 are disordered; it reads SGVKELNIMSNTPPPRPPKPSYLSEQRQDQPLLTGHSSNKKPGYT. Polar residues predominate over residues 317–331; the sequence is LSEQRQDQPLLTGHS. Serine 346 carries the phosphoserine modification. Disordered regions lie at residues 389–408 and 418–463; these read PSAE…SELR and PMSS…QEHT. Over residues 454-463 the composition is skewed to polar residues; that stretch reads RNLSTIQEHT. Serine 480 is subject to Phosphoserine. Positions 493 to 513 are disordered; that stretch reads STPSEEEEEEEEEEEEEEEEE. Acidic residues predominate over residues 496 to 513; that stretch reads SEEEEEEEEEEEEEEEEE.

Belongs to the GAB family. Interacts with PIK3R/p85, SHP2 and GRAP2/MONA. May interact with Grb2. In terms of processing, phosphorylated on tyrosine residue(s) after macrophage colony-stimulating factor (M-CSF) receptor stimulation. Highly expressed in spleen and thymus and weakly in brain, heart, lung, kidney, uterus, and embryonic stem cells. Also expressed in myeloid and macrophage cell lines.

In Mus musculus (Mouse), this protein is GRB2-associated-binding protein 3 (Gab3).